We begin with the raw amino-acid sequence, 175 residues long: ATP synthase subunit b (175 aa).

A helical transmembrane segment spans residues 22 to 42 (LNLLETNIINIAIVFGLLIFL).

The protein belongs to the ATPase B chain family. F-type ATPases have 2 components, F(1) - the catalytic core - and F(0) - the membrane proton channel. F(1) has five subunits: alpha(3), beta(3), gamma(1), delta(1), epsilon(1). F(0) has four main subunits: a(1), b(1), b'(1) and c(10-14). The alpha and beta chains form an alternating ring which encloses part of the gamma chain. F(1) is attached to F(0) by a central stalk formed by the gamma and epsilon chains, while a peripheral stalk is formed by the delta, b and b' chains.

Its subcellular location is the cell inner membrane. Its function is as follows. F(1)F(0) ATP synthase produces ATP from ADP in the presence of a proton or sodium gradient. F-type ATPases consist of two structural domains, F(1) containing the extramembraneous catalytic core and F(0) containing the membrane proton channel, linked together by a central stalk and a peripheral stalk. During catalysis, ATP synthesis in the catalytic domain of F(1) is coupled via a rotary mechanism of the central stalk subunits to proton translocation. In terms of biological role, component of the F(0) channel, it forms part of the peripheral stalk, linking F(1) to F(0). The protein is ATP synthase subunit b of Gloeobacter violaceus (strain ATCC 29082 / PCC 7421).